Reading from the N-terminus, the 465-residue chain is Argininosuccinate lyase (465 aa).

It belongs to the lyase 1 family. Argininosuccinate lyase subfamily.

It localises to the cytoplasm. The enzyme catalyses 2-(N(omega)-L-arginino)succinate = fumarate + L-arginine. The protein operates within amino-acid biosynthesis; L-arginine biosynthesis; L-arginine from L-ornithine and carbamoyl phosphate: step 3/3. The chain is Argininosuccinate lyase from Rhodopseudomonas palustris (strain BisB18).